The chain runs to 67 residues: SPbeta prophage-derived uncharacterized protein YopZ (67 aa).

Residues 1–40 (MTSEMQLQAQIDVIEKENKELRRRNEELGQTVECQNKQIV) are a coiled coil. The chain crosses the membrane as a helical span at residues 44–66 (WRLLFFASSWIVYGIVSAIKYLW).

The protein localises to the cell membrane. In Bacillus subtilis (strain 168), this protein is SPbeta prophage-derived uncharacterized protein YopZ (yopZ).